The sequence spans 277 residues: Glutamate racemase (277 aa).

Residues Asp9–Ser10 and Tyr41–Gly42 each bind substrate. Residue Cys73 is the Proton donor/acceptor of the active site. Residue Asn74 to Thr75 coordinates substrate. Cys183 functions as the Proton donor/acceptor in the catalytic mechanism. Position 184–185 (Thr184–His185) interacts with substrate.

This sequence belongs to the aspartate/glutamate racemases family.

It carries out the reaction L-glutamate = D-glutamate. The protein operates within cell wall biogenesis; peptidoglycan biosynthesis. Its function is as follows. Provides the (R)-glutamate required for cell wall biosynthesis. The sequence is that of Glutamate racemase from Shewanella denitrificans (strain OS217 / ATCC BAA-1090 / DSM 15013).